The chain runs to 191 residues: Potassium-transporting ATPase KdpC subunit (191 aa).

A helical transmembrane segment spans residues 6–26 (PALVLFILLTLLTGGVYPLLT).

It belongs to the KdpC family. As to quaternary structure, the system is composed of three essential subunits: KdpA, KdpB and KdpC.

The protein resides in the cell inner membrane. Functionally, part of the high-affinity ATP-driven potassium transport (or Kdp) system, which catalyzes the hydrolysis of ATP coupled with the electrogenic transport of potassium into the cytoplasm. This subunit acts as a catalytic chaperone that increases the ATP-binding affinity of the ATP-hydrolyzing subunit KdpB by the formation of a transient KdpB/KdpC/ATP ternary complex. The chain is Potassium-transporting ATPase KdpC subunit from Klebsiella pneumoniae (strain 342).